The primary structure comprises 52 residues: uncharacterized protein (52 aa).

This is an uncharacterized protein from Thermoproteus tenax (TTV1).